Here is a 338-residue protein sequence, read N- to C-terminus: Ketol-acid reductoisomerase (NADP(+)) (338 aa).

Residues 1–181 enclose the KARI N-terminal Rossmann domain; sequence MNVFYDKDAD…GGGRAGIIET (181 aa). Residues 24–27, R47, and S52 each bind NADP(+); that span reads YGSQ. H107 is a catalytic residue. G133 lines the NADP(+) pocket. One can recognise a KARI C-terminal knotted domain in the interval 182-327; that stretch reads NFREETETDL…AKLRAMMPWI (146 aa). The Mg(2+) site is built by D190, E194, E226, and E230. S251 contributes to the substrate binding site.

It belongs to the ketol-acid reductoisomerase family. Mg(2+) is required as a cofactor.

It catalyses the reaction (2R)-2,3-dihydroxy-3-methylbutanoate + NADP(+) = (2S)-2-acetolactate + NADPH + H(+). The catalysed reaction is (2R,3R)-2,3-dihydroxy-3-methylpentanoate + NADP(+) = (S)-2-ethyl-2-hydroxy-3-oxobutanoate + NADPH + H(+). It participates in amino-acid biosynthesis; L-isoleucine biosynthesis; L-isoleucine from 2-oxobutanoate: step 2/4. It functions in the pathway amino-acid biosynthesis; L-valine biosynthesis; L-valine from pyruvate: step 2/4. Involved in the biosynthesis of branched-chain amino acids (BCAA). Catalyzes an alkyl-migration followed by a ketol-acid reduction of (S)-2-acetolactate (S2AL) to yield (R)-2,3-dihydroxy-isovalerate. In the isomerase reaction, S2AL is rearranged via a Mg-dependent methyl migration to produce 3-hydroxy-3-methyl-2-ketobutyrate (HMKB). In the reductase reaction, this 2-ketoacid undergoes a metal-dependent reduction by NADPH to yield (R)-2,3-dihydroxy-isovalerate. This chain is Ketol-acid reductoisomerase (NADP(+)), found in Burkholderia cenocepacia (strain ATCC BAA-245 / DSM 16553 / LMG 16656 / NCTC 13227 / J2315 / CF5610) (Burkholderia cepacia (strain J2315)).